The sequence spans 226 residues: MSLSNSLGLLGRKVGMMRLFTDDGDAVPVTVVDVSNNRVTQIKSQETDGYVALQVTFGSRKASRVTKPQAGHLAKAGVEAGEIIREFRVTADTAGQHKAGAVIAASSVFSVGQKVDVQGTSIGKGYAGTIKRHNMSSQRASHGNSRSHNVPGSIGMAQDPGRVFPGKRMTGHLGDVTKTTQNLDVFRIDEARQLLLIKGAIPGSKGGFVTVRPAIKAKPQAAEGAK.

A compositionally biased stretch (polar residues) spans 135 to 150 (MSSQRASHGNSRSHNV). Residues 135–158 (MSSQRASHGNSRSHNVPGSIGMAQ) form a disordered region. Gln158 is modified (N5-methylglutamine).

It belongs to the universal ribosomal protein uL3 family. In terms of assembly, part of the 50S ribosomal subunit. Forms a cluster with proteins L14 and L19. Post-translationally, methylated by PrmB.

In terms of biological role, one of the primary rRNA binding proteins, it binds directly near the 3'-end of the 23S rRNA, where it nucleates assembly of the 50S subunit. This chain is Large ribosomal subunit protein uL3, found in Variovorax paradoxus (strain S110).